The sequence spans 440 residues: Glycerol-3-phosphate dehydrogenase [NAD(+)] 2, mitochondrial (440 aa).

The transit peptide at 1–16 directs the protein to the mitochondrion; sequence MLAVRRLTRYTFLKRT. Phosphoserine is present on residues Ser-70, Ser-72, and Ser-75. NAD(+) contacts are provided by residues 90 to 95, Phe-122, and Phe-178; that span reads GSGNWG. Position 201 (Lys-201) interacts with substrate. An NAD(+)-binding site is contributed by Ala-234. Catalysis depends on Lys-294, which acts as the Proton acceptor. 2 residues coordinate NAD(+): Arg-359 and Gln-388. A substrate-binding site is contributed by 359–360; it reads RN.

It belongs to the NAD-dependent glycerol-3-phosphate dehydrogenase family.

The protein localises to the cytoplasm. Its subcellular location is the mitochondrion. The enzyme catalyses sn-glycerol 3-phosphate + NAD(+) = dihydroxyacetone phosphate + NADH + H(+). Its function is as follows. Catalyzes the production of glycerol under anaerobic growth conditions. Glycerol production serves as a redox sink by consuming the excess cytosolic NADH during anaerobic metabolism. The sequence is that of Glycerol-3-phosphate dehydrogenase [NAD(+)] 2, mitochondrial from Saccharomyces cerevisiae (strain ATCC 204508 / S288c) (Baker's yeast).